A 508-amino-acid chain; its full sequence is 25-hydroxyvitamin D-1 alpha hydroxylase, mitochondrial (508 aa).

Cysteine 455 serves as a coordination point for heme.

This sequence belongs to the cytochrome P450 family. The cofactor is heme. In terms of tissue distribution, kidney.

Its subcellular location is the mitochondrion membrane. It carries out the reaction calcidiol + 2 reduced [adrenodoxin] + O2 + 2 H(+) = calcitriol + 2 oxidized [adrenodoxin] + H2O. It catalyses the reaction secalciferol + 2 reduced [adrenodoxin] + O2 + 2 H(+) = calcitetrol + 2 oxidized [adrenodoxin] + H2O. The enzyme catalyses 25-hydroxy-24-oxocalciol + 2 reduced [adrenodoxin] + O2 + 2 H(+) = (1S)-1,25-dihydroxy-24-oxocalciol + 2 oxidized [adrenodoxin] + H2O. The catalysed reaction is 25-hydroxyvitamin D2 + 2 reduced [adrenodoxin] + O2 + 2 H(+) = 1alpha,25-dihydroxyvitamin D2 + 2 oxidized [adrenodoxin] + H2O. It functions in the pathway hormone biosynthesis; vitamin D biosynthesis. Activated by cardiolipin and dioleoyl phosphatidylethanolamine (DOPE), phospholipids found in the inner mitochondrial membrane. Inhibited by high substrate concentration. In terms of biological role, a cytochrome P450 monooxygenase involved in vitamin D metabolism and in calcium and phosphorus homeostasis. Catalyzes the rate-limiting step in the activation of vitamin D in the kidney, namely the hydroxylation of 25-hydroxyvitamin D3/calcidiol at the C1alpha-position to form the hormonally active form of vitamin D3, 1alpha,25-dihydroxyvitamin D3/calcitriol that acts via the vitamin D receptor (VDR). Has 1alpha-hydroxylase activity on vitamin D intermediates of the CYP24A1-mediated inactivation pathway. Converts 24R,25-dihydroxyvitamin D3/secalciferol to 1-alpha,24,25-trihydroxyvitamin D3, an active ligand of VDR. Also active on 25-hydroxyvitamin D2. Mechanistically, uses molecular oxygen inserting one oxygen atom into a substrate, and reducing the second into a water molecule, with two electrons provided by NADPH via FDXR/adrenodoxin reductase and FDX1/adrenodoxin. The protein is 25-hydroxyvitamin D-1 alpha hydroxylase, mitochondrial (CYP27B1) of Homo sapiens (Human).